The chain runs to 455 residues: tRNA-2-methylthio-N(6)-dimethylallyladenosine synthase (455 aa).

Residues 10 to 130 (RKVFIKTYGC…LPDALKRVRR (121 aa)) enclose the MTTase N-terminal domain. The [4Fe-4S] cluster site is built by C19, C55, C93, C171, C175, and C178. The 233-residue stretch at 157–389 (RSRGVTAFLT…QALLLRQQKE (233 aa)) folds into the Radical SAM core domain. Residues 392-454 (ESLVGKTMDV…PNSLFAEVAG (63 aa)) form the TRAM domain.

Belongs to the methylthiotransferase family. MiaB subfamily. Monomer. Requires [4Fe-4S] cluster as cofactor.

It localises to the cytoplasm. It catalyses the reaction N(6)-dimethylallyladenosine(37) in tRNA + (sulfur carrier)-SH + AH2 + 2 S-adenosyl-L-methionine = 2-methylsulfanyl-N(6)-dimethylallyladenosine(37) in tRNA + (sulfur carrier)-H + 5'-deoxyadenosine + L-methionine + A + S-adenosyl-L-homocysteine + 2 H(+). Catalyzes the methylthiolation of N6-(dimethylallyl)adenosine (i(6)A), leading to the formation of 2-methylthio-N6-(dimethylallyl)adenosine (ms(2)i(6)A) at position 37 in tRNAs that read codons beginning with uridine. The sequence is that of tRNA-2-methylthio-N(6)-dimethylallyladenosine synthase from Agrobacterium fabrum (strain C58 / ATCC 33970) (Agrobacterium tumefaciens (strain C58)).